The chain runs to 483 residues: Cytochrome P450 71A23 (483 aa).

A helical membrane pass occupies residues 1–21 (MILFLCLIILFIITILFFKKH). Cys429 provides a ligand contact to heme.

The protein belongs to the cytochrome P450 family. It depends on heme as a cofactor.

The protein resides in the membrane. The polypeptide is Cytochrome P450 71A23 (CYP71A23) (Arabidopsis thaliana (Mouse-ear cress)).